A 115-amino-acid chain; its full sequence is NADH-ubiquinone oxidoreductase chain 3 (115 aa).

Transmembrane regions (helical) follow at residues 5-25 (TALLVNITLSMLLIIVAFWFF), 55-75 (FFLVAITFLLFDLEIALLLPL), and 86-106 (IMMLTAFILISVLALGLAYEW).

Belongs to the complex I subunit 3 family. As to quaternary structure, core subunit of respiratory chain NADH dehydrogenase (Complex I) which is composed of 45 different subunits. Interacts with TMEM186. Interacts with TMEM242.

It is found in the mitochondrion inner membrane. The enzyme catalyses a ubiquinone + NADH + 5 H(+)(in) = a ubiquinol + NAD(+) + 4 H(+)(out). Its function is as follows. Core subunit of the mitochondrial membrane respiratory chain NADH dehydrogenase (Complex I) which catalyzes electron transfer from NADH through the respiratory chain, using ubiquinone as an electron acceptor. Essential for the catalytic activity of complex I. The polypeptide is NADH-ubiquinone oxidoreductase chain 3 (Peromyscus sejugis (Santa Cruz mouse)).